The sequence spans 245 residues: 1-(5-phosphoribosyl)-5-[(5-phosphoribosylamino)methylideneamino] imidazole-4-carboxamide isomerase (245 aa).

Asp7 serves as the catalytic Proton acceptor. Catalysis depends on Asp129, which acts as the Proton donor.

It belongs to the HisA/HisF family.

The protein localises to the cytoplasm. The catalysed reaction is 1-(5-phospho-beta-D-ribosyl)-5-[(5-phospho-beta-D-ribosylamino)methylideneamino]imidazole-4-carboxamide = 5-[(5-phospho-1-deoxy-D-ribulos-1-ylimino)methylamino]-1-(5-phospho-beta-D-ribosyl)imidazole-4-carboxamide. It functions in the pathway amino-acid biosynthesis; L-histidine biosynthesis; L-histidine from 5-phospho-alpha-D-ribose 1-diphosphate: step 4/9. The chain is 1-(5-phosphoribosyl)-5-[(5-phosphoribosylamino)methylideneamino] imidazole-4-carboxamide isomerase from Alteromonas mediterranea (strain DSM 17117 / CIP 110805 / LMG 28347 / Deep ecotype).